A 208-amino-acid polypeptide reads, in one-letter code: Ribosome maturation factor RimP (208 aa).

The protein belongs to the RimP family.

The protein resides in the cytoplasm. In terms of biological role, required for maturation of 30S ribosomal subunits. In Bartonella tribocorum (strain CIP 105476 / IBS 506), this protein is Ribosome maturation factor RimP.